The chain runs to 1400 residues: MSTESGPGTRLRNLPVMGDGLETSQMSTTQAQAQPQPANAASTNPPPPETSNPNKPKRQTNQLQYLLRVVLKTLWKHQFAWPFQQPVDAVKLNLPDYYKIIKTPMDMGTIKKRLENNYYWNAQECIQDFNTMFTNCYIYNKPGDDIVLMAEALEKLFLQKINELPTEETEIMIVQAKGRGRGRKETGAAKPGVSTVPNTTQASTSPQTQTPQQNPPPPVQATTHPFPAVTPDLIAQPPVMTMVPPQPLQTPSPVPPQPPPPPAPVPQPVQSHPPIIATTPQPVKTKKGVKRKADTTTPTTIDPIHEPPSLAPEPKTAKLGPRRESSRPVKPPKKDVPDSQQHPGPEKSSKISEQLKCCSGILKEMFAKKHAAYAWPFYKPVDVEALGLHDYCDIIKHPMDMSTIKSKLESREYRDAQEFGADVRLMFSNCYKYNPPDHEVVAMARKLQDVFEMRFAKMPDEPEEPVVTVSSPAVPPPTKVVAPPSSSDSSSDSSSDSDSSTDDSEEERAQRLAELQEQLKAVHEQLAALSQPQQNKPKKKEKDKKEKKKEKHKKKEEVEENKKSKTKELPPKKTKKNNSSNSNVSKKEPVPTKTKPPPTYESEEEDKCKPMSYEEKRQLSLDINKLPGEKLGRVVHIIQSREPSLKNSNPDEIEIDFETLKPSTLRELERYVTSCLRKKRKPQAEKVDVIAGSSKMKGFSSSESESTSESSSSDSEDSETEMAPKSKKKGHTGRDQKKHHHHHHPQMQPAPAPVPQQPPPPPQQPPPPPPPQQQQQQPPPPPPPPSMPQQTAPAMKSSPPPFITAQVPVLEPQLPGSVFDPIGHFTQPILHLPQPELPPHLPQPPEHSTPPHLNQHAVVSPPALHNALPQQPSRPSNRAAALPPKPTRPPAVSPALAQPPLLPQPPMAQPPQVLLEDEEPPAPPLTSMQMQLYLQQLQKVQPPTPLLPSVKVQSQPPPPLPPPPHPSVQQQQLQPQPPPPPPPQPQPPPQQQHQPPPRPVHLPSMPFSAHIQQPPPPPGQQPTHPPPGQQPPPPQPAKPQQVIQHHPSPRHHKSDPYSAGHLREAPSPLMIHSPQMPQFQSLTHQSPPQQNVQPKKQVKGRAEPQPPGPVMGQGQGCPPASPAAVPMLSQELRPPSVVQPQPLVVVKEEKIHSPIIRSEPFSTSLRPEPPKHPENIKAPVHLPQRPEMKPVDIGRPVIRPPEQSAPPPGAPDKDKQKQEPKTPVAPKKDLKIKNMGSWASLVQKHPTTPSSTAKSSSDSFEHFRRAAREKEEREKALKAQAEHAEKEKERLRQERMRSREDEDALEQARRAHEEARRRQEQQQQQQQQRQEQQQQQQQAAAVAAASAPQAQSSQPQSMLDQQRELARKREQERRRREAMAATIDMNFQSDLLSIFEENLF.

Residues 1–58 are disordered; that stretch reads MSTESGPGTRLRNLPVMGDGLETSQMSTTQAQAQPQPANAASTNPPPPETSNPNKPKR. The segment covering 23 to 43 has biased composition (low complexity); it reads TSQMSTTQAQAQPQPANAAST. Positions 58–164 constitute a Bromo 1 domain; it reads RQTNQLQYLL…KLFLQKINEL (107 aa). A Glycyl lysine isopeptide (Lys-Gly) (interchain with G-Cter in SUMO2) cross-link involves residue Lys-99. 2 disordered regions span residues 176–353 and 461–616; these read AKGR…KISE and EPEE…YEEK. Over residues 197-212 the composition is skewed to low complexity; the sequence is PNTTQASTSPQTQTPQ. Residues 244–267 show a composition bias toward pro residues; that stretch reads PPQPLQTPSPVPPQPPPPPAPVPQ. The span at 321-337 shows a compositional bias: basic and acidic residues; it reads PRRESSRPVKPPKKDVP. The Bromo 2 domain maps to 349 to 458; the sequence is SKISEQLKCC…DVFEMRFAKM (110 aa). Phosphoserine is present on Ser-471. The span at 479–498 shows a compositional bias: low complexity; it reads KVVAPPSSSDSSSDSSSDSD. 3 positions are modified to phosphoserine; by CK2: Ser-485, Ser-489, and Ser-493. The NPS region stretch occupies residues 485–504; sequence SSSDSSSDSSSDSDSSTDDS. At Ser-495 the chain carries Phosphoserine. A phosphoserine; by CK2 mark is found at Ser-499, Ser-500, and Ser-504. A BID region region spans residues 525 to 580; it reads QLAALSQPQQNKPKKKEKDKKEKKKEKHKKKEEVEENKKSKTKELPPKKTKKNNSS. Positions 536–554 are enriched in basic residues; sequence KPKKKEKDKKEKKKEKHKK. Basic and acidic residues predominate over residues 555–571; it reads KEEVEENKKSKTKELPP. Lys-586 participates in a covalent cross-link: Glycyl lysine isopeptide (Lys-Gly) (interchain with G-Cter in SUMO2). Residues 601-683 enclose the NET domain; that stretch reads ESEEEDKCKP…SCLRKKRKPQ (83 aa). A Phosphoserine modification is found at Ser-602. The span at 606–616 shows a compositional bias: basic and acidic residues; it reads DKCKPMSYEEK. Residues Lys-646 and Lys-695 each participate in a glycyl lysine isopeptide (Lys-Gly) (interchain with G-Cter in SUMO2) cross-link. Residues 675–1125 form a disordered region; it reads CLRKKRKPQA…GCPPASPAAV (451 aa). Residues 700-713 are compositionally biased toward low complexity; that stretch reads SSSESESTSESSSS. Over residues 725-745 the composition is skewed to basic residues; it reads KSKKKGHTGRDQKKHHHHHHP. Composition is skewed to pro residues over residues 748–787, 835–848, 883–892, and 900–909; these read QPAP…PPSM, PELP…PEHS, PPKPTRPPAV, and PLLPQPPMAQ. The span at 928 to 938 shows a compositional bias: low complexity; the sequence is MQMQLYLQQLQ. Composition is skewed to pro residues over residues 955–966, 975–1000, and 1013–1037; these read QPPPPLPPPPHP, PQPP…PRPV, and QPPP…PQPA. The tract at residues 1050 to 1400 is C-terminal (CTD) region; that stretch reads RHHKSDPYSA…LLSIFEENLF (351 aa). Lys-1053 is covalently cross-linked (Glycyl lysine isopeptide (Lys-Gly) (interchain with G-Cter in SUMO2)). Over residues 1075–1084 the composition is skewed to polar residues; it reads QMPQFQSLTH. Low complexity predominate over residues 1085-1095; sequence QSPPQQNVQPK. Lys-1147 carries the N6-acetyllysine; alternate modification. Lys-1147 is covalently cross-linked (Glycyl lysine isopeptide (Lys-Gly) (interchain with G-Cter in SUMO1); alternate). Lys-1147 participates in a covalent cross-link: Glycyl lysine isopeptide (Lys-Gly) (interchain with G-Cter in SUMO2); alternate. A phosphoserine mark is found at Ser-1153 and Ser-1162. Residues 1155–1377 form a disordered region; it reads IIRSEPFSTS…KREQERRRRE (223 aa). Basic and acidic residues predominate over residues 1211-1232; that stretch reads PDKDKQKQEPKTPVAPKKDLKI. Lys-1233 participates in a covalent cross-link: Glycyl lysine isopeptide (Lys-Gly) (interchain with G-Cter in SUMO2). A phosphoserine mark is found at Ser-1237 and Ser-1240. Positions 1247–1258 are enriched in low complexity; the sequence is TTPSSTAKSSSD. Basic and acidic residues predominate over residues 1259–1320; sequence SFEHFRRAAR…AHEEARRRQE (62 aa). A compositionally biased stretch (low complexity) spans 1321–1357; it reads QQQQQQQQRQEQQQQQQQAAAVAAASAPQAQSSQPQS. The span at 1361–1377 shows a compositional bias: basic and acidic residues; sequence QQRELARKREQERRRRE.

Belongs to the BET family. As to quaternary structure, binds acetylated histone H4. Interacts with p53/TP53; the interaction is direct. Interacts (via CTD region) with CDK9 and CCNT1, acting as an associated component of P-TEFb complex. Interacts with RELA (when acetylated at 'Lys-310'). Interacts (via NET domain) with NSD3, CHD4, BICRA and ATAD5. The interaction with BICRA bridges BRD4 to the GBAF complex. Interacts (via NET domain) with JMJD6 (via JmjC and N-terminal domains); the interaction is stronger in presence of ssRNA and recruits JMJD6 on distal enhancers. Interacts with NSD3. Interacts with NIPBL. Post-translationally, phosphorylation by CK2 disrupt the intramolecular binding between the bromo domain 2 and the NPS region and promotes binding between the NPS and the BID regions, leading to activate the protein and promote binding to acetylated histones. In absence of phosphorylation, BRD4 does not localize to p53/TP53 target gene promoters, phosphorylation promoting recruitment to p53/TP53 target promoters.

Its subcellular location is the nucleus. It localises to the chromosome. Functionally, chromatin reader protein that recognizes and binds acetylated histones and plays a key role in transmission of epigenetic memory across cell divisions and transcription regulation. Remains associated with acetylated chromatin throughout the entire cell cycle and provides epigenetic memory for postmitotic G1 gene transcription by preserving acetylated chromatin status and maintaining high-order chromatin structure. During interphase, plays a key role in regulating the transcription of signal-inducible genes by associating with the P-TEFb complex and recruiting it to promoters. Also recruits P-TEFb complex to distal enhancers, so called anti-pause enhancers in collaboration with JMJD6. BRD4 and JMJD6 are required to form the transcriptionally active P-TEFb complex by displacing negative regulators such as HEXIM1 and 7SKsnRNA complex from P-TEFb, thereby transforming it into an active form that can then phosphorylate the C-terminal domain (CTD) of RNA polymerase II. Regulates differentiation of naive CD4(+) T-cells into T-helper Th17 by promoting recruitment of P-TEFb to promoters. Promotes phosphorylation of 'Ser-2' of the C-terminal domain (CTD) of RNA polymerase II. According to a report, directly acts as an atypical protein kinase and mediates phosphorylation of 'Ser-2' of the C-terminal domain (CTD) of RNA polymerase II; these data however need additional evidences in vivo. In addition to acetylated histones, also recognizes and binds acetylated RELA, leading to further recruitment of the P-TEFb complex and subsequent activation of NF-kappa-B. Also acts as a regulator of p53/TP53-mediated transcription: following phosphorylation by CK2, recruited to p53/TP53 specific target promoters. The chain is Bromodomain-containing protein 4 (Brd4) from Mus musculus (Mouse).